A 361-amino-acid polypeptide reads, in one-letter code: Chorismate synthase (361 aa).

An NADP(+)-binding site is contributed by R47. FMN is bound by residues 124–126 (RAS), G286, 301–305 (KPTAT), and R327.

This sequence belongs to the chorismate synthase family. In terms of assembly, homotetramer. Requires FMNH2 as cofactor.

It carries out the reaction 5-O-(1-carboxyvinyl)-3-phosphoshikimate = chorismate + phosphate. Its pathway is metabolic intermediate biosynthesis; chorismate biosynthesis; chorismate from D-erythrose 4-phosphate and phosphoenolpyruvate: step 7/7. Functionally, catalyzes the anti-1,4-elimination of the C-3 phosphate and the C-6 proR hydrogen from 5-enolpyruvylshikimate-3-phosphate (EPSP) to yield chorismate, which is the branch point compound that serves as the starting substrate for the three terminal pathways of aromatic amino acid biosynthesis. This reaction introduces a second double bond into the aromatic ring system. This chain is Chorismate synthase, found in Prochlorococcus marinus (strain NATL1A).